The chain runs to 549 residues: Cation/acetate symporter ActP (549 aa).

Topologically, residues 1–32 are periplasmic; the sequence is MKRVLTALAATLPFAANAADAISGAVERQPTN. The helical transmembrane segment at 33–55 threads the bilayer; it reads WQAIIMFLIFVVFTLGITYWASK. The Cytoplasmic segment spans residues 56 to 75; that stretch reads RVRSRSDYYTAGGNITGFQN. A helical transmembrane segment spans residues 76-98; that stretch reads GLAIAGDYMSAASFLGISALVFT. The Periplasmic portion of the chain corresponds to 99 to 102; the sequence is SGYD. Residues 103–125 form a helical membrane-spanning segment; it reads GLIYSLGFLVGWPIILFLIAERL. Residues 126–145 lie on the Cytoplasmic side of the membrane; the sequence is RNLGRYTSADVASYRLKQGP. A helical transmembrane segment spans residues 146 to 168; it reads IRILSACGSLVVVALYLIAQMVG. Residues 169-182 lie on the Periplasmic side of the membrane; that stretch reads AGKLIELLFGLNYH. The helical transmembrane segment at 183 to 205 threads the bilayer; the sequence is IAVVLVGVLMMMYVLFGGMLATT. Topologically, residues 206-211 are cytoplasmic; sequence WVQIIK. Residues 212–234 traverse the membrane as a helical segment; it reads AVLLLFGASFMAFMVMKHVGFSF. Residues 235–260 lie on the Periplasmic side of the membrane; the sequence is NNLFSEAMAVHPKGVDIMKPGGLVKD. The helical transmembrane segment at 261–283 threads the bilayer; the sequence is PISALSLGLGLMFGTAGLPHILM. The Cytoplasmic segment spans residues 284–302; it reads RFFTVSDAREARKSVFYAT. The helical transmembrane segment at 303 to 325 threads the bilayer; that stretch reads GFMGYFYILTFIIGFGAIMLVGA. The Periplasmic segment spans residues 326-349; it reads NPEYKDAAGHLIGGNNMAAVHLAN. A helical membrane pass occupies residues 350 to 372; the sequence is AVGGNLFLGFISAVAFATILAVV. The Cytoplasmic segment spans residues 373–401; it reads ADLTLAGASAVSHDLYANVFKKGATEREE. The helical transmembrane segment at 402 to 424 threads the bilayer; that stretch reads LRVSKITVLILGVIAIILGVLFE. Residues 425–427 are Periplasmic-facing; the sequence is NQN. The helical transmembrane segment at 428–450 threads the bilayer; sequence IAFMVGLAFAIAASCNFPIILLS. Residues 451-461 are Cytoplasmic-facing; the sequence is MYWSKLTTRGA. The helical transmembrane segment at 462 to 484 threads the bilayer; the sequence is MLGGWLGLITAVVLMILGPTIWV. The Periplasmic segment spans residues 485–493; that stretch reads QILGHEKAI. Residues 494–516 form a helical membrane-spanning segment; sequence FPYEYPALFSISVAFLGIWFFSA. At 517–549 the chain is on the cytoplasmic side; the sequence is TDNSAEGARERELFRAQFIRSQTGFGVEQGRAH.

This sequence belongs to the sodium:solute symporter (SSF) (TC 2.A.21) family.

It localises to the cell inner membrane. In terms of biological role, transports acetate. The chain is Cation/acetate symporter ActP (actP) from Shigella flexneri.